The sequence spans 232 residues: UPF0502 protein mma_2112 (232 aa).

This sequence belongs to the UPF0502 family.

This is UPF0502 protein mma_2112 from Janthinobacterium sp. (strain Marseille) (Minibacterium massiliensis).